A 302-amino-acid chain; its full sequence is Large ribosomal subunit protein uL29m (302 aa).

This sequence belongs to the universal ribosomal protein uL29 family. As to quaternary structure, component of the mitochondrial large ribosomal subunit. Mature mitochondrial ribosomes consist of a small (37S) and a large (54S) subunit. The 37S subunit contains at least 33 different proteins and 1 molecule of RNA (15S). The 54S subunit contains at least 45 different proteins and 1 molecule of RNA (21S).

The protein localises to the mitochondrion. In Debaryomyces hansenii (strain ATCC 36239 / CBS 767 / BCRC 21394 / JCM 1990 / NBRC 0083 / IGC 2968) (Yeast), this protein is Large ribosomal subunit protein uL29m (MRPL4).